The primary structure comprises 147 residues: Small ribosomal subunit protein uS12 (147 aa).

This sequence belongs to the universal ribosomal protein uS12 family. Part of the 30S ribosomal subunit.

Its function is as follows. With S4 and S5 plays an important role in translational accuracy. Located at the interface of the 30S and 50S subunits. The polypeptide is Small ribosomal subunit protein uS12 (Pyrococcus abyssi (strain GE5 / Orsay)).